We begin with the raw amino-acid sequence, 113 residues long: Beta-microseminoprotein A1 (113 aa).

An N-terminal signal peptide occupies residues 1 to 20 (MNVLLGGLVIFATFVTLCNG). 5 disulfides stabilise this stretch: cysteine 22/cysteine 70, cysteine 38/cysteine 62, cysteine 57/cysteine 93, cysteine 60/cysteine 69, and cysteine 84/cysteine 107.

It belongs to the beta-microseminoprotein family.

It localises to the secreted. This is Beta-microseminoprotein A1 (MSPA) from Saguinus oedipus (Cotton-top tamarin).